The chain runs to 82 residues: MKKFLIALVKAYQRWISPLFPLSCRFCPTCSVYMIQAIEKHGLKGVLMGIARILRCHPLSETGDDPVPDYFSLKRKKTPLDN.

Belongs to the UPF0161 family.

The protein resides in the cell membrane. In terms of biological role, could be involved in insertion of integral membrane proteins into the membrane. The protein is Putative membrane protein insertion efficiency factor of Streptococcus thermophilus (strain ATCC BAA-491 / LMD-9).